We begin with the raw amino-acid sequence, 82 residues long: Small ribosomal subunit protein bS18 (82 aa).

The segment at 1-24 (MKRTNMKKARMEQSRRPKKNPLKA) is disordered.

This sequence belongs to the bacterial ribosomal protein bS18 family. As to quaternary structure, part of the 30S ribosomal subunit. Forms a tight heterodimer with protein bS6.

Functionally, binds as a heterodimer with protein bS6 to the central domain of the 16S rRNA, where it helps stabilize the platform of the 30S subunit. The protein is Small ribosomal subunit protein bS18 of Corynebacterium jeikeium (strain K411).